We begin with the raw amino-acid sequence, 302 residues long: MDQYSSSLVDTSLDLTIGVTRMRVEEDPPTSALVEELNRVSAENKKLSEMLTLMCDNYNVLRKQLMEYVNKSNITERDQISPPKKRKSPAREDAFSCAVIGGVSESSSTDQDEYLCKKQREETVVKEKVSRVYYKTEASDTTLVVKDGYQWRKYGQKVTRDNPSPRAYFKCACAPSCSVKKKVQRSVEDQSVLVATYEGEHNHPMPSQIDSNNGLNRHISHGGSASTPVAANRRSSLTVPVTTVDMIESKKVTSPTSRIDFPQVQKLLVEQMASSLTKDPNFTAALAAAVTGKLYQQNHTEK.

The segment at residues 140–206 (DTTLVVKDGY…YEGEHNHPMP (67 aa)) is a DNA-binding region (WRKY).

This sequence belongs to the WRKY group III family.

It is found in the nucleus. Functionally, transcription factor. Interacts specifically with the W box (5'-(T)TGAC[CT]-3'), a frequently occurring elicitor-responsive cis-acting element. The sequence is that of Probable WRKY transcription factor 40 from Arabidopsis thaliana (Mouse-ear cress).